A 491-amino-acid chain; its full sequence is Ketol-acid reductoisomerase (NADP(+)) (491 aa).

Positions 14-208 constitute a KARI N-terminal Rossmann domain; it reads LKHLGKCRFM…GSHRAGVLES (195 aa). NADP(+) contacts are provided by residues 45–48, R68, and S78; that span reads CGSQ. H132 is a catalytic residue. G158 is an NADP(+) binding site. KARI C-terminal knotted domains lie at 209 to 344 and 345 to 485; these read SFVA…QAPN and YQQE…MQNM. Mg(2+)-binding residues include D217, E221, E389, and E393. S414 lines the substrate pocket.

The protein belongs to the ketol-acid reductoisomerase family. Mg(2+) serves as cofactor.

It catalyses the reaction (2R)-2,3-dihydroxy-3-methylbutanoate + NADP(+) = (2S)-2-acetolactate + NADPH + H(+). It carries out the reaction (2R,3R)-2,3-dihydroxy-3-methylpentanoate + NADP(+) = (S)-2-ethyl-2-hydroxy-3-oxobutanoate + NADPH + H(+). Its pathway is amino-acid biosynthesis; L-isoleucine biosynthesis; L-isoleucine from 2-oxobutanoate: step 2/4. The protein operates within amino-acid biosynthesis; L-valine biosynthesis; L-valine from pyruvate: step 2/4. Functionally, involved in the biosynthesis of branched-chain amino acids (BCAA). Catalyzes an alkyl-migration followed by a ketol-acid reduction of (S)-2-acetolactate (S2AL) to yield (R)-2,3-dihydroxy-isovalerate. In the isomerase reaction, S2AL is rearranged via a Mg-dependent methyl migration to produce 3-hydroxy-3-methyl-2-ketobutyrate (HMKB). In the reductase reaction, this 2-ketoacid undergoes a metal-dependent reduction by NADPH to yield (R)-2,3-dihydroxy-isovalerate. The polypeptide is Ketol-acid reductoisomerase (NADP(+)) (Blochmanniella pennsylvanica (strain BPEN)).